The primary structure comprises 557 residues: Potassium-transporting ATPase potassium-binding subunit (557 aa).

10 consecutive transmembrane segments (helical) span residues 6 to 26 (IQLL…GLGL), 59 to 79 (ALSL…ILFF), 127 to 147 (AGLT…LLAL), 172 to 192 (LYVL…FGVV), 247 to 267 (ISNF…VFLY), 278 to 298 (WAIF…VWTF), 363 to 383 (IVFG…LLTV), 410 to 430 (ILGI…SVSV), 475 to 495 (VMIA…VLVI), and 520 to 540 (FYIL…FPVL).

The protein belongs to the KdpA family. As to quaternary structure, the system is composed of three essential subunits: KdpA, KdpB and KdpC.

Its subcellular location is the cell inner membrane. In terms of biological role, part of the high-affinity ATP-driven potassium transport (or Kdp) system, which catalyzes the hydrolysis of ATP coupled with the electrogenic transport of potassium into the cytoplasm. This subunit binds the periplasmic potassium ions and delivers the ions to the membrane domain of KdpB through an intramembrane tunnel. The protein is Potassium-transporting ATPase potassium-binding subunit of Leptospira interrogans serogroup Icterohaemorrhagiae serovar copenhageni (strain Fiocruz L1-130).